Consider the following 402-residue polypeptide: S-adenosylmethionine synthase (402 aa).

140 to 145 (GNGSID) is an ATP binding site.

The protein belongs to the AdoMet synthase 2 family. Mg(2+) is required as a cofactor.

It carries out the reaction L-methionine + ATP + H2O = S-adenosyl-L-methionine + phosphate + diphosphate. It functions in the pathway amino-acid biosynthesis; S-adenosyl-L-methionine biosynthesis; S-adenosyl-L-methionine from L-methionine: step 1/1. In terms of biological role, catalyzes the formation of S-adenosylmethionine from methionine and ATP. This chain is S-adenosylmethionine synthase, found in Picrophilus torridus (strain ATCC 700027 / DSM 9790 / JCM 10055 / NBRC 100828 / KAW 2/3).